The following is a 424-amino-acid chain: Phosphomethylpyrimidine synthase (424 aa).

Residues methionine 94, tyrosine 123, histidine 162, 184-186, 225-228, and glutamate 264 each bind substrate; these read SRG and NGMR. Histidine 268 contacts Zn(2+). Tyrosine 291 contacts substrate. Histidine 332 is a Zn(2+) binding site. Positions 406, 409, and 413 each coordinate [4Fe-4S] cluster.

It belongs to the ThiC family. It depends on [4Fe-4S] cluster as a cofactor.

It catalyses the reaction 5-amino-1-(5-phospho-beta-D-ribosyl)imidazole + S-adenosyl-L-methionine = 4-amino-2-methyl-5-(phosphooxymethyl)pyrimidine + CO + 5'-deoxyadenosine + formate + L-methionine + 3 H(+). It participates in cofactor biosynthesis; thiamine diphosphate biosynthesis. Its function is as follows. Catalyzes the synthesis of the hydroxymethylpyrimidine phosphate (HMP-P) moiety of thiamine from aminoimidazole ribotide (AIR) in a radical S-adenosyl-L-methionine (SAM)-dependent reaction. In Methanosphaerula palustris (strain ATCC BAA-1556 / DSM 19958 / E1-9c), this protein is Phosphomethylpyrimidine synthase.